The chain runs to 224 residues: Orotate phosphoribosyltransferase (224 aa).

Residues K26, 73–74 (YK), R100, K101, K104, H106, and 127–135 (EDVTTSGKS) each bind 5-phospho-alpha-D-ribose 1-diphosphate. Residues T131 and R160 each contribute to the orotate site.

Belongs to the purine/pyrimidine phosphoribosyltransferase family. PyrE subfamily. As to quaternary structure, homodimer. Mg(2+) serves as cofactor.

The enzyme catalyses orotidine 5'-phosphate + diphosphate = orotate + 5-phospho-alpha-D-ribose 1-diphosphate. It participates in pyrimidine metabolism; UMP biosynthesis via de novo pathway; UMP from orotate: step 1/2. Catalyzes the transfer of a ribosyl phosphate group from 5-phosphoribose 1-diphosphate to orotate, leading to the formation of orotidine monophosphate (OMP). This chain is Orotate phosphoribosyltransferase, found in Clostridium botulinum (strain Eklund 17B / Type B).